The following is a 203-amino-acid chain: Casparian strip membrane protein 1 (203 aa).

Ala2 bears the N-acetylalanine mark. Over 2–40 (AKESTTIDVGEPSTVTKSSSHVVKKKGFVAAAAGGGAKR) the chain is Cytoplasmic. A helical membrane pass occupies residues 41-61 (GLAIFDFLLRLAAIGVTIGAA). Topologically, residues 62 to 92 (SVMYTAQETLPFFTQFLQFQAGYDDLPAFQY) are extracellular. The helical transmembrane segment at 93 to 113 (FVIAVAIVASYLVLSLPFSIV) threads the bilayer. The Cytoplasmic portion of the chain corresponds to 114–124 (TIVRPLAVAPR). The helical transmembrane segment at 125–145 (LILLIFDTLVVTLNTSAAAAA) threads the bilayer. The Extracellular portion of the chain corresponds to 146 to 177 (ASIVYLAHNGNQSTNWLPICQQFGDFCQNVST). 2 N-linked (GlcNAc...) asparagine glycosylation sites follow: Asn156 and Asn174. A helical membrane pass occupies residues 178–198 (AVVAASIAILFFIVLIIISAI). Residues 199–203 (ALKRH) are Cytoplasmic-facing.

It belongs to the Casparian strip membrane proteins (CASP) family. Homodimer and heterodimers.

It is found in the cell membrane. Its function is as follows. Regulates membrane-cell wall junctions and localized cell wall deposition. Required for establishment of the Casparian strip membrane domain (CSD) and the subsequent formation of Casparian strips, a cell wall modification of the root endodermis that determines an apoplastic barrier between the intraorganismal apoplasm and the extraorganismal apoplasm and prevents lateral diffusion. The polypeptide is Casparian strip membrane protein 1 (Arabidopsis lyrata subsp. lyrata (Lyre-leaved rock-cress)).